Reading from the N-terminus, the 80-residue chain is Pre-core protein X (80 aa).

A propeptide spanning residues 2–32 is cleaved from the precursor; sequence ALTCRLRFPVPGFRGRMHRRRGMAGHGLTGG. Residues 18 to 45 are disordered; sequence MHRRRGMAGHGLTGGMRRAHHRRRRASH. Residues 34–45 show a composition bias toward basic residues; the sequence is RRAHHRRRRASH. The propeptide occupies 52–80; it reads ILPLLIPLIAAAIGAVPGIASVALQAQRH.

The protein belongs to the adenoviridae core protein X family. As to quaternary structure, interacts with the core-capsid bridging protein; this interaction bridges the virus core to the capsid. Cleaved by the viral protease during virion maturation to form the mature protein.

The protein resides in the host nucleus. It is found in the host nucleolus. It localises to the virion. Functionally, interacts with the viral DNA and aids in tightly condensing it within the capsid. Cleavage of pre-core protein X may serve to partially relax this structure within the mature virion prior to its entry into the nucleus. This is Pre-core protein X from Human adenovirus C serotype 2 (HAdV-2).